The following is a 215-amino-acid chain: SAGA complex/transcription factor TFIID complex subunit Taf10 (215 aa).

Residues 1 to 77 (MSDINNNEPA…SRERHGSNYV (77 aa)) are disordered. Residues 23-42 (GNNSMSVDEQPETSSTNLPT) show a composition bias toward polar residues. The segment covering 58-73 (NNEDSPKSDDSRERHG) has biased composition (basic and acidic residues). Positions 58–203 (NNEDSPKSDD…VDDLSAALNE (146 aa)) constitute a Histone-fold domain.

This sequence belongs to the TAF10 family. As to quaternary structure, component of the 1.8 MDa SAGA (Spt-Ada-Gcn5 acetyltransferase) complex, which is composed of 19 subunits tra1, spt7, taf5, ngg1/ada3, sgf73, spt20, spt8, taf12, taf6, hfi1/ada1, ubp8, gcn5, ada2, spt3, sgf29, taf10, taf9, sgf11 and sus1. The SAGA complex is composed of 4 modules, namely the HAT (histone acetyltransferase) module (gcn5, ada2, ngg1/ada3 and sgf29), the DUB (deubiquitinating) module (ubp8, sgf11, sgf73 and sus1), the core or TAF (TBP-associated factor) module (taf5, taf6, taf9, taf10 and taf12), and the Tra1 or SPT (Suppressor of Ty) module (tra1, hfi1/ada1, spt3, spt7, spt8 and spt20). The Tra1/SPT module binds activators, the core module recruits TBP (TATA-binding protein), the HAT module contains the histone H3 acetyltransferase gcn5, and the DUB module comprises the histone H2B deubiquitinase ubp8. Component of the 1.2 MDa TFIID complex, which is composed of TATA-binding protein (TBP) and the 14 TBP-associated factors (TAFs). It comprises 1 copy of each taf1, taf2, taf3, taf7, taf8, taf11, taf13, 2 copies of each taf4, taf5, taf6, taf9, taf10, taf12, and 3 copies of taf14. In TFIID, taf10 heterodimerizes with taf3 and taf8.

The protein resides in the nucleus. Functionally, functions as a component of both the DNA-binding general transcription initiation factor complex TFIID and the transcription coactivator SAGA complex. Binding of TFIID to a promoter (with or without TATA element) is the initial step in pre-initiation complex (PIC) formation. TFIID plays a key role in the regulation of gene expression by RNA polymerase II through different activities such as transcription activator interaction, core promoter recognition and selectivity, TFIIA and TFIIB interaction, chromatin modification (histone acetylation by TAF1), facilitation of DNA opening and initiation of transcription. SAGA acts as a general cofactor required for essentially all RNA polymerase II transcription. At the promoters, SAGA is required for transcription pre-initiation complex (PIC) recruitment. It influences RNA polymerase II transcriptional activity through different activities such as TBP interaction (via core/TAF module) and promoter selectivity, interaction with transcription activators (via Tra1/SPT module), and chromatin modification through histone acetylation (via HAT module) and deubiquitination (via DUB module). SAGA preferentially acetylates histones H3 (to form H3K9ac, H3K14ac, H3K18ac and H3K23ac) and H2B and deubiquitinates histone H2B. SAGA interacts with DNA via upstream activating sequences (UASs). This chain is SAGA complex/transcription factor TFIID complex subunit Taf10, found in Schizosaccharomyces pombe (strain 972 / ATCC 24843) (Fission yeast).